The primary structure comprises 192 residues: Probable apo-citrate lyase phosphoribosyl-dephospho-CoA transferase (192 aa).

This sequence belongs to the CitX family.

The enzyme catalyses apo-[citrate lyase ACP] + 2'-(5''-triphospho-alpha-D-ribosyl)-3'-dephospho-CoA = holo-[citrate lyase ACP] + diphosphate. Functionally, transfers 2-(5''-triphosphoribosyl)-3'-dephosphocoenzyme-A on a serine residue to the apo-acyl carrier protein (gamma chain) of the citrate lyase to yield holo-acyl carrier protein. The sequence is that of Probable apo-citrate lyase phosphoribosyl-dephospho-CoA transferase from Streptococcus pyogenes serotype M6 (strain ATCC BAA-946 / MGAS10394).